The primary structure comprises 469 residues: 3-isopropylmalate dehydratase large subunit (469 aa).

[4Fe-4S] cluster contacts are provided by C347, C410, and C413.

It belongs to the aconitase/IPM isomerase family. LeuC type 1 subfamily. Heterodimer of LeuC and LeuD. The cofactor is [4Fe-4S] cluster.

It catalyses the reaction (2R,3S)-3-isopropylmalate = (2S)-2-isopropylmalate. The protein operates within amino-acid biosynthesis; L-leucine biosynthesis; L-leucine from 3-methyl-2-oxobutanoate: step 2/4. In terms of biological role, catalyzes the isomerization between 2-isopropylmalate and 3-isopropylmalate, via the formation of 2-isopropylmaleate. This chain is 3-isopropylmalate dehydratase large subunit, found in Burkholderia mallei (strain NCTC 10247).